The primary structure comprises 415 residues: MPASTLNDLLEAGVTGRTVLIRSDLNVPLDGDTVTDDGRIRASLPAIRDLAEAGARVIVMAHLGRPKGEPDPAYSLRPVAARMAELLGADVALAADVTGDDARAQAAALQDGQVLLLENVRFDARETSKDDAERAALAGEMAALAGEDGAYVGDAFGAVHRKHASVFDVAAQLPAYQGPLVAAELEVLTRLTESPEQPYVVVLGGSKVSDKLAVIDNLLDKADTLLIGGGMLFTFLKAQGHEVGASLLEEDQLDTVRAYLRRSEAGAARIVLPTDIVMASGFAADAEHEVLAADALTSGAHGASAMGLDIGPETARAFAEQIRGAQTVFWNGPMGVFEFPAFAEGTRAVARALTEASAAGGLSVVGGGDSAAAVRTLGFADDAFGHISTGGGASLEYLEGKELPGVTALAGEGRA.

Substrate-binding positions include 24 to 26 (DLN), Arg39, 62 to 65 (HLGR), Arg121, and Arg161. ATP-binding positions include Lys211, Gly307, Glu338, and 367-370 (GGDS).

This sequence belongs to the phosphoglycerate kinase family. Monomer.

Its subcellular location is the cytoplasm. It carries out the reaction (2R)-3-phosphoglycerate + ATP = (2R)-3-phospho-glyceroyl phosphate + ADP. The protein operates within carbohydrate degradation; glycolysis; pyruvate from D-glyceraldehyde 3-phosphate: step 2/5. This is Phosphoglycerate kinase from Micrococcus luteus (strain ATCC 4698 / DSM 20030 / JCM 1464 / CCM 169 / CCUG 5858 / IAM 1056 / NBRC 3333 / NCIMB 9278 / NCTC 2665 / VKM Ac-2230) (Micrococcus lysodeikticus).